Here is a 192-residue protein sequence, read N- to C-terminus: Potassium channel HX13_20290 (192 aa).

A helical transmembrane segment spans residues 1-24 (MTKGRLEAFSDGVLAIIITIMVLE). A RxxxFSD motif motif is present at residues 5 to 11 (RLEAFSD). A topological domain (cytoplasmic) is located at residue Leu-25. The short helix H1 stretch occupies residues 26-29 (KVPE). At 26 to 39 (KVPEGSSWASLQPI) the chain is on the extracellular side. The short helix H2 stretch occupies residues 31-37 (SSWASLQ). A helical membrane pass occupies residues 40 to 65 (LPRFLAYIFSFIYVGIYWNNHHHLFQ). At 66 to 71 (TVKKVN) the chain is on the cytoplasmic side. A helical membrane pass occupies residues 72-93 (GSILWANLHLLFWLSLMPIATE). Residues 94–101 (WIGTSHFA) lie on the Extracellular side of the membrane. A helical membrane pass occupies residues 102 to 126 (QNPVATYGIGLIMSAIAYTILENVI). Topologically, residues 127-133 (IRCEGEN) are cytoplasmic. Residues 134–162 (SKLKEAIHSKFKEYISIIFYVLGIATSFF) form a helical membrane-spanning segment. Topologically, residues 163 to 164 (YP) are extracellular. The chain crosses the membrane as a helical span at residues 165–180 (YIAIGFYYLVALIWLI). Topologically, residues 181 to 192 (PDKRIEKSLKEN) are cytoplasmic.

The protein belongs to the TMEM175 family. As to quaternary structure, homotetramer.

The protein localises to the membrane. The catalysed reaction is K(+)(in) = K(+)(out). Potassium channel. This is Potassium channel HX13_20290 from Chryseobacterium sp. (strain P1-3).